The primary structure comprises 443 residues: Amino-acid acetyltransferase (443 aa).

An N-acetyltransferase domain is found at E296 to S435.

This sequence belongs to the acetyltransferase family. ArgA subfamily. Homohexamer.

It is found in the cytoplasm. The catalysed reaction is L-glutamate + acetyl-CoA = N-acetyl-L-glutamate + CoA + H(+). Its pathway is amino-acid biosynthesis; L-arginine biosynthesis; N(2)-acetyl-L-ornithine from L-glutamate: step 1/4. This chain is Amino-acid acetyltransferase, found in Enterobacter sp. (strain 638).